The sequence spans 158 residues: Nascent polypeptide-associated complex subunit beta (158 aa).

Disordered regions lie at residues 1 to 40 (MDQA…DKKL) and 119 to 158 (ESYQ…SKVE). Positions 16-31 (GKGKGTPRRKTKKVHK) are enriched in basic residues. In terms of domain architecture, NAC-A/B spans 34-99 (GTDDKKLQTS…GEDKELTELV (66 aa)). The span at 137-152 (DDDDDDEIPDLVEGEN) shows a compositional bias: acidic residues.

Belongs to the NAC-beta family. In terms of assembly, part of the nascent polypeptide-associated complex (NAC), consisting of EGD2 and EGD1. NAC associates with ribosomes via EGD1.

Its subcellular location is the cytoplasm. The protein localises to the nucleus. Its function is as follows. Component of the nascent polypeptide-associated complex (NAC), a dynamic component of the ribosomal exit tunnel, protecting the emerging polypeptides from interaction with other cytoplasmic proteins to ensure appropriate nascent protein targeting. The NAC complex also promotes mitochondrial protein import by enhancing productive ribosome interactions with the outer mitochondrial membrane and blocks the inappropriate interaction of ribosomes translating non-secretory nascent polypeptides with translocation sites in the membrane of the endoplasmic reticulum. EGD1 may act as a transcription factor that exert a negative effect on the expression of several genes that are transcribed by RNA polymerase II. This chain is Nascent polypeptide-associated complex subunit beta (EGD1), found in Ajellomyces capsulatus (strain NAm1 / WU24) (Darling's disease fungus).